Here is a 599-residue protein sequence, read N- to C-terminus: Elongation factor 4 (599 aa).

A tr-type G domain is found at Lys2–Glu184. GTP is bound by residues Asp14–Thr19 and Asn131–Asp134.

Belongs to the TRAFAC class translation factor GTPase superfamily. Classic translation factor GTPase family. LepA subfamily.

It is found in the cell inner membrane. It carries out the reaction GTP + H2O = GDP + phosphate + H(+). Its function is as follows. Required for accurate and efficient protein synthesis under certain stress conditions. May act as a fidelity factor of the translation reaction, by catalyzing a one-codon backward translocation of tRNAs on improperly translocated ribosomes. Back-translocation proceeds from a post-translocation (POST) complex to a pre-translocation (PRE) complex, thus giving elongation factor G a second chance to translocate the tRNAs correctly. Binds to ribosomes in a GTP-dependent manner. This Erwinia tasmaniensis (strain DSM 17950 / CFBP 7177 / CIP 109463 / NCPPB 4357 / Et1/99) protein is Elongation factor 4.